A 187-amino-acid chain; its full sequence is UPF0301 protein YqgE (187 aa).

This sequence belongs to the UPF0301 (AlgH) family.

The chain is UPF0301 protein YqgE from Escherichia coli O127:H6 (strain E2348/69 / EPEC).